The primary structure comprises 620 residues: MYND-type zinc finger protein MUB1 (620 aa).

The MYND-type; degenerate zinc finger occupies 514 to 555; it reads NFSCGKWEDFPRQFAKCRRCKRTKYCSRKCQLKAWGYHRYWC. Zn(2+) is bound by residues Cys530, Cys533, His551, and Cys555. Positions 563 to 606 are enriched in polar residues; it reads MRSTNTTTGVNTPNEPSSLNATATTAADVSNSTSTFTPNISTTV. The tract at residues 563–620 is disordered; that stretch reads MRSTNTTTGVNTPNEPSSLNATATTAADVSNSTSTFTPNISTTVPDEISNRDENSIPE. Residues 610–620 are compositionally biased toward basic and acidic residues; it reads ISNRDENSIPE.

It belongs to the MUB1/samB family. In terms of assembly, interacts with UBR2 and RPN4.

Its subcellular location is the cytoplasm. Functionally, involved in the determination of the onset of polarized growth. Required for the ubiquitin-dependent degradation of RPN4. Cooperates with UBR2 to transfer ubiquitin from RAD6 to RPN4. In Saccharomyces cerevisiae (strain ATCC 204508 / S288c) (Baker's yeast), this protein is MYND-type zinc finger protein MUB1 (MUB1).